Here is a 310-residue protein sequence, read N- to C-terminus: Glutaminase 1 (310 aa).

Residues Ser66, Asn117, Glu161, Asn168, Tyr192, Tyr244, and Val262 each coordinate substrate. Position 294 is an N6-acetyllysine (Lys294).

Belongs to the glutaminase family. In terms of assembly, homotetramer.

It catalyses the reaction L-glutamine + H2O = L-glutamate + NH4(+). This chain is Glutaminase 1, found in Escherichia coli (strain K12).